Consider the following 434-residue polypeptide: D-amino acid dehydrogenase (434 aa).

3–17 (VLVLGSGVIGTASAY) contacts FAD.

This sequence belongs to the DadA oxidoreductase family. The cofactor is FAD.

The catalysed reaction is a D-alpha-amino acid + A + H2O = a 2-oxocarboxylate + AH2 + NH4(+). The protein operates within amino-acid degradation; D-alanine degradation; NH(3) and pyruvate from D-alanine: step 1/1. Oxidative deamination of D-amino acids. The protein is D-amino acid dehydrogenase of Pseudomonas putida (strain ATCC 700007 / DSM 6899 / JCM 31910 / BCRC 17059 / LMG 24140 / F1).